A 597-amino-acid chain; its full sequence is MKHIRNFSIIAHIDHGKSTLSDRLIQVCGGLSDREMAAQVLDSMDLERERGITIKAQSVTLDYTAKDGETYQLNFIDTPGHVDFSYEVSRSLAACEGALLVVDAGQGVEAQTLANCYTAIEMDLEVVPILNKIDLPAADPDRVAEEIEEIVGIDATDATRCSAKTGLGVDEVLETIVKSIPAPEGDPDAPTQALIIDSWFDNYLGVVSLVRIKNGSLKKNDKIKVMSTGQVWGIDRIGIFTPKQIDTDVLNTGEVGWVVCGIKDILGAPVGDTLTHAKGGCEERLPGFQKVKPQVYAGLFPVSSDDYENFRDALGKLSLNDASLFYEPESSAALGFGFRCGFLGMLHMEIIQERLEREYDLDLITTAPTVVYEVVLNNGDLLYVDSPSKLPAVNDLDEIREPIARCNILVPADYLGNVISLCVEKRGVQVDMVYHGNQVALTYDIPMSEVVLDFFDRLKSTSRGYASLDYNFQRYEASNMVRVDVLINGDRVDALAIITHHDNAQGRGRLLVEKMKEFIPRQMFDIAIQAAIGAHIIARSTVKQLRKNVIAKCYGGDISRKKKLLKKQKEGKKRMKQIGNVELPQEAFLAILHVGKD.

The tr-type G domain occupies 2-184; that stretch reads KHIRNFSIIA…TIVKSIPAPE (183 aa). Residues 14 to 19 and 131 to 134 each bind GTP; these read DHGKST and NKID.

This sequence belongs to the TRAFAC class translation factor GTPase superfamily. Classic translation factor GTPase family. LepA subfamily.

The protein localises to the cell inner membrane. The enzyme catalyses GTP + H2O = GDP + phosphate + H(+). In terms of biological role, required for accurate and efficient protein synthesis under certain stress conditions. May act as a fidelity factor of the translation reaction, by catalyzing a one-codon backward translocation of tRNAs on improperly translocated ribosomes. Back-translocation proceeds from a post-translocation (POST) complex to a pre-translocation (PRE) complex, thus giving elongation factor G a second chance to translocate the tRNAs correctly. Binds to ribosomes in a GTP-dependent manner. In Aliivibrio fischeri (strain MJ11) (Vibrio fischeri), this protein is Elongation factor 4.